A 434-amino-acid polypeptide reads, in one-letter code: Glutamyl-tRNA reductase (434 aa).

Substrate contacts are provided by residues 49–52 (TCNR), serine 109, 114–116 (EPQ), and glutamine 120. The active-site Nucleophile is cysteine 50. Residue 189 to 194 (GAGEMA) coordinates NADP(+).

This sequence belongs to the glutamyl-tRNA reductase family. In terms of assembly, homodimer.

It carries out the reaction (S)-4-amino-5-oxopentanoate + tRNA(Glu) + NADP(+) = L-glutamyl-tRNA(Glu) + NADPH + H(+). The protein operates within porphyrin-containing compound metabolism; protoporphyrin-IX biosynthesis; 5-aminolevulinate from L-glutamyl-tRNA(Glu): step 1/2. Its function is as follows. Catalyzes the NADPH-dependent reduction of glutamyl-tRNA(Glu) to glutamate 1-semialdehyde (GSA). This Desulfatibacillum aliphaticivorans protein is Glutamyl-tRNA reductase.